A 1061-amino-acid chain; its full sequence is Error-prone DNA polymerase (1061 aa).

The protein belongs to the DNA polymerase type-C family. DnaE2 subfamily.

The protein localises to the cytoplasm. The enzyme catalyses DNA(n) + a 2'-deoxyribonucleoside 5'-triphosphate = DNA(n+1) + diphosphate. DNA polymerase involved in damage-induced mutagenesis and translesion synthesis (TLS). It is not the major replicative DNA polymerase. The chain is Error-prone DNA polymerase from Bdellovibrio bacteriovorus (strain ATCC 15356 / DSM 50701 / NCIMB 9529 / HD100).